The primary structure comprises 245 residues: MAGHSKWANIKHRKGKADAKKGKIFSRIAKEIISAVKLGGADQKNNPRLRLALQKARDANMPNENIDRNIKKASSADQEDYHEMTYELYGHGGVGIVVDVMTDNKNRISSDMRIATNKRGGTVATPGAVTFNFDRKGILQISKKNAIEEELFLAATEAGAEDFEVDNDVFIITTDPSHLYSVKDAINHLGFACEEAELGMIPRTYVECSVETAKDNLALIEWLEELEDVDAVYHNMKIPEELENE.

The protein belongs to the TACO1 family.

The protein resides in the cytoplasm. The chain is Probable transcriptional regulatory protein pc1328 from Protochlamydia amoebophila (strain UWE25).